Here is a 547-residue protein sequence, read N- to C-terminus: MKKVLVNQVGFLCNAPKKAVLNFQANEFSVVDGNGKKAFDGKVEHFGTDEISGEDTYVADFSALTEEGKYKIVADGQESVLFSISNDAYDKLMKDICKCFYYLRCGDALSKEFAGEYYHKPCHMTKATVYGEDVEPVDVTGGWHDAGDYGRYSTAGAVAVAHLLYGVRFFKGLLDVHYDIPKVAGDKGNLPEILAEVKVELDFLMKMQRENGSVWHKVTTFNHAPFLMPEDDREELFLFSVSSLATADIAAVFALAYTVYKEYDAEYADKLMQKSLLAYKWLLDNPDELLFFNPDGSNTGQYDEAEDISNRFWAACALYEATSDGKYYSDAQELKNRLEEFDKNAQKKGYQGNVFTCLGWAEVAGLGSLSLLLKREENALCSLARNSFVAEADRLVKVSKENGFGLCMGENDFIWGSNMELLKYMMVLSTAIRIDNKPEYKLALEAGLDYILGCNSMDISYVTGNGEKAFKNPHLRPTAVDDIEEPWPGLVSGGPNSGLHDERAQTLRGKGLPPMKCYIDHIDCYSLNEITIYWNSPLVFALSGILE.

Residue D148 is the Nucleophile of the active site. Catalysis depends on residues H474, D520, and E529.

The protein belongs to the glycosyl hydrolase 9 (cellulase E) family.

It is found in the secreted. The enzyme catalyses Endohydrolysis of (1-&gt;4)-beta-D-glucosidic linkages in cellulose, lichenin and cereal beta-D-glucans.. Its activity is regulated as follows. Is not inhibited by methylcellulose. Its function is as follows. Glycoside hydrolase that rapidly hydrolyzes short-chain cellodextrins to yield either cellobiose or cellobiose and glucose as end products; cellobiose is not hydrolyzed further. Also shows limited activity against endoglucanase specific substrates (carboxymethylcellulose (CMC), lichenan, laminarin and xylan). The polypeptide is Cellodextrinase (Butyrivibrio fibrisolvens).